The sequence spans 625 residues: 1-deoxy-D-xylulose-5-phosphate synthase (625 aa).

Thiamine diphosphate contacts are provided by residues histidine 80 and 121-123; that span reads GHS. Position 152 (aspartate 152) interacts with Mg(2+). Thiamine diphosphate-binding positions include 153-154, asparagine 181, tyrosine 290, and glutamate 371; that span reads GA. Asparagine 181 contributes to the Mg(2+) binding site.

Belongs to the transketolase family. DXPS subfamily. As to quaternary structure, homodimer. Mg(2+) serves as cofactor. Requires thiamine diphosphate as cofactor.

It catalyses the reaction D-glyceraldehyde 3-phosphate + pyruvate + H(+) = 1-deoxy-D-xylulose 5-phosphate + CO2. The protein operates within metabolic intermediate biosynthesis; 1-deoxy-D-xylulose 5-phosphate biosynthesis; 1-deoxy-D-xylulose 5-phosphate from D-glyceraldehyde 3-phosphate and pyruvate: step 1/1. Functionally, catalyzes the acyloin condensation reaction between C atoms 2 and 3 of pyruvate and glyceraldehyde 3-phosphate to yield 1-deoxy-D-xylulose-5-phosphate (DXP). This Haemophilus influenzae (strain 86-028NP) protein is 1-deoxy-D-xylulose-5-phosphate synthase.